The sequence spans 2227 residues: MNMSKQGIFQTVGSGLDHILSLADIEEEQMIQSVDRTAVTGASYFTSVDQSSVHTAEVGSHQIEPLKTSVDKPGSKKTQGEKFFLIHSADWLTTHALFHEVAKLDVVKLLYNEQFAVQGLLRYHTYARFGIEIQVQINPTPFSQGGLICAMVPGDQSYGSIASLTVYPHGLLNCNINNVVRIKVPFIYTRGAYHFKDPQYPVWELTIRVWSELNIGTGTSAYTSLNVLARFTDLELHGLTPLSTQMMRNEFRVSTTENVVNLSNYEDARAKMSFALDQEDWKSDPSQGGGIKITHFTTWTSIPTLAAQFPFNASDSVGQQIKVIPVDPYFFQMTNTNPDQKCITALASICQMFCFWRGDLVFDFQVFPTKYHSGRLLFCFVPGNELIDVTGITLKQATTAPCAVMDITGVQSTLRFRVPWISDTPYRVNRYTKSAHQKGEYTAIGKLIVYCYNRLTSPSNVASHVRVNVYLSAINLECFAPLYHAMDVTTQVGDDSGGFSTTVSTEQNVPDPQVGIITMRDLKGKANRGKMDVSGVQAPVGAITTIEDPVLAKKVPETFPELKPGESRHTSDHMSIYKFMGRSHFLCTFIFNSNNKEYTFPITLSSTSNPPHGLPSTLRWFFNLFQLYRGPLDLTIIITGATDVDGMAWFTPVGLAVDTPWVEKESALSIDYKTALGAVRFNTRRTGNIQIRLPWYSYLYAVSGALDGLGDKTDSTFGLVSIQIANYNHSDEYLSFSCYLSVTEQSEFYFPRAPLNSNAMLSTESMMSRIAAGDLESSVDDPRSEEDRRFESHIECRKPYKELRLEVGKQRLKYAQEELSNEVLPPPRKMKGVFSQAKISLFYTEEHEIMKFSWRGVTADTRALRRFGFSMAAGRSVWTLEMDAGVLTGRLVRLNDEKWTEMKDDKIVSLIEKFTSNKYWSKVNFPHGMLDLEEIAANSKDFPNMSETDLCFLLHWLNPKKINLADRMLGLSGVQEIKEQGVGLIAECRTFLDSIAGTLKSMMFGFHHSVTVEIINTVLCFVKSGILLYVIQQLNQDEHSHIIGLLRVMNYVDIGCSVISCGKVFSKMLETVFNWQMDSRMMELRTQSFSNWLRDICSGITIFKSFKDAIYWLYTKLKDFYEVNYGKKKDVLNILKDNRQKIEKAIEEADNLCILQIQDVEKFDQYQKGVDLIQKLRTVHSMAQVDPNLGVHLSPLRDCIARVHQKLKNLGSINQAMVTRCEPVVCYLIGKRGGGKSLTSIALATKICKHYGVEPEKNIYTKPVASDYWDGYSGQLVCIIDDIGQNTTDEDWSDFCQLVSGCPMRLNMASLEEKGRHFSSPFIIATSNWSNPSPKTVYVKEAIDRRLHFKVEVKPASFFKNPHNDMLNVNLAKTNDAIKDMSCVDLIMDGHNISLMDLLSSLVMTVEIRKQNMSEFMELWSQGISDYDNDSAVAEFFQSFPSGKPSNSKLSSFFQSVTNHKWVAVGAAVGILGVLVAGWFVYRHFSRKEEEPIPTEGVYYGVTKPKQVIKLDADPVESQSPLEIAGLVRKNLVQFGVGEKNGCVRWVMNALGVKDDWLLVPSHAYKFEKDYEMMEFYFNRGGTYYSISAGNVVIQSLDVGFQDVVLMKVPTIPKFRDITQHFIKKGDVPRALNRLATLVTTVNGTPMLISEGPLKMEEKATYVHKKNDGTTVDLTVDQAWRGKGEGLPGMCGGALVSSNQSIQNAILGIHVAGGNSILVAKLVTQEMFQNIDKKIESQRIMKVEFSQCSMNVVSKTLFRKSPIHHHIDKTMINFPAALPFSKAEIDPMAIMLSKYSLPIVEEPEDYKEASVFYQNKIVGKTQLVDDFLDLDMAITGAPGIDAINMDSSPGFPYVQEKLTKRDLIWLDENGLLLGVHPRLAQRILFNTVMMENCSDLDVVFTTCPKDELRPLEKVLESKTRAIDACPLDYTILCRMYWGPAISYFHLNPGFHTGVAIGIDPDRQWDELFKTMIRFGDVGLDLDFSAFDASLSPFMIREAGRIMSELSGTPSHFGTALINTIIYSKHLLYNCCYHVYGSMPSGSPCTALLNSIINNINLYYVFSKIFGKSPVFFCQALRILCYGDDVLIVFSRDVQIDNLDLIGQKIVDEFRKLGMTATSADKNVPQLKPVSELTFLKRSFNLVEDRIRPAISEKTIWSLIAWQRGNAEFEQNLENAQWFAFMHGYEFYQKFYYFVQSCLEKEMIEYRLKSYDWWRMRFYDQCFICDLS.

2 short sequence motifs ((L)YPX(n)L motif) span residues 167 to 171 (YPHGL) and 200 to 205 (YPVWEL). The involved in P1-2A pentamerization stretch occupies residues 766–836 (MMSRIAAGDL…PRKMKGVFSQ (71 aa)). A helical membrane pass occupies residues 1011–1031 (TVEIINTVLCFVKSGILLYVI). Residues 1043–1070 (IGLLRVMNYVDIGCSVISCGKVFSKMLE) are membrane-penetrating ability. A coiled-coil region spans residues 1127-1155 (KKKDVLNILKDNRQKIEKAIEEADNLCIL). The region spanning 1204-1366 (HQKLKNLGSI…SFFKNPHNDM (163 aa)) is the SF3 helicase domain. 1230 to 1237 (GKRGGGKS) lines the ATP pocket. Residues 1462–1482 (WVAVGAAVGILGVLVAGWFVY) traverse the membrane as a helical segment. Tyr-1499 is modified (O-(5'-phospho-RNA)-tyrosine). The Peptidase C3 domain maps to 1514 to 1728 (DPVESQSPLE…VAKLVTQEMF (215 aa)). Active-site for protease 3C activity residues include His-1563, Asp-1603, and Cys-1691. The region spanning 1976-2097 (DVGLDLDFSA…VFSRDVQIDN (122 aa)) is the RdRp catalytic domain.

Belongs to the picornaviridae polyprotein family. In terms of assembly, homodimer. Homomultimer; probably interacts with membranes in a multimeric form. Seems to assemble into amyloid-like fibers. As to quaternary structure, homodimer. Monomer. Interacts with protein 3CD. Interacts with host ACBD3. In terms of assembly, interacts with protein 3AB. As to quaternary structure, interacts with human MAVS. Homodimer; disulfide-linked. In terms of assembly, homopentamer. Homooligomer. As to quaternary structure, interacts with capsid protein VP2. Interacts with capsid protein VP3. Interacts with capsid protein VP1. Interacts with capsid protein VP3. In terms of assembly, interacts with capsid protein VP1. Interacts with capsid protein VP2. Specific enzymatic cleavages by viral protease in vivo yield a variety of precursors and mature proteins. Polyprotein processing intermediates are produced, such as P1-2A which is a functional precursor of the structural proteins, VP0 which is a VP4-VP2 precursor, VP1-2A precursor, 3ABC precursor which is a stable and catalytically active precursor of 3A, 3B and 3C proteins, 3AB and 3CD precursors. The assembly signal 2A is removed from VP1-2A by a host protease, possibly host Cathepsin L. This cleavage occurs over a region of 3 amino-acids probably generating VP1 proteins with heterogeneous C-termini. Post-translationally, during virion maturation, immature virions are rendered infectious following cleavage of VP0 into VP4 and VP2. This maturation seems to be an autocatalytic event triggered by the presence of RNA in the capsid and is followed by a conformational change of the particle. In terms of processing, the assembly signal 2A is removed from VP1-2A by a host protease, possibly host Cathepsin L in naked virions. This cleavage does not occur in enveloped virions. This cleavage occurs over a region of 3 amino-acids probably generating VP1 proteins with heterogeneous C-termini. VPg is uridylylated prior to priming replication into VPg-pUpU. Post-translationally, unlike other picornaviruses, does not seem to be myristoylated.

The protein resides in the virion. It is found in the host endosome. It localises to the host multivesicular body. The protein localises to the host membrane. Its subcellular location is the host mitochondrion outer membrane. The protein resides in the host cytoplasm. It is found in the host cytoplasmic vesicle membrane. It catalyses the reaction RNA(n) + a ribonucleoside 5'-triphosphate = RNA(n+1) + diphosphate. It carries out the reaction a ribonucleoside 5'-triphosphate + H2O = a ribonucleoside 5'-diphosphate + phosphate + H(+). The catalysed reaction is Selective cleavage of Gln-|-Gly bond in the poliovirus polyprotein. In other picornavirus reactions Glu may be substituted for Gln, and Ser or Thr for Gly.. In terms of biological role, capsid proteins VP1, VP2, and VP3 form a closed capsid enclosing the viral positive strand RNA genome. All these proteins contain a beta-sheet structure called beta-barrel jelly roll. Together they form an icosahedral capsid (T=3) composed of 60 copies of each VP1, VP2, and VP3, with a diameter of approximately 300 Angstroms. VP1 is situated at the 12 fivefold axes, whereas VP2 and VP3 are located at the quasi-sixfold axes. The naked capsid interacts with the host receptor HAVCR1 to provide virion attachment to and probably entry into the target cell. Its function is as follows. VP0 precursor is a component of the immature procapsids. Plays a role in the assembly of the 12 pentamers into an icosahedral structure. Has not been detected in mature virions, supposedly owing to its small size. Functionally, precursor component of immature procapsids that corresponds to an extended form of the structural protein VP1. After maturation, possibly by the host Cathepsin L, the assembly signal 2A is cleaved to give rise to the mature VP1 protein. In terms of biological role, functions as a viroporin. Affects membrane integrity and causes an increase in membrane permeability. Involved in host intracellular membrane rearrangements probably to give rise to the viral factories. Does not disrupt calcium homeostasis or glycoprotein trafficking. Antagonizes the innate immune response of the host by suppressing IFN-beta synthesis, which it achieves by interfering with the RIG-I/IFIH1 pathway. Its function is as follows. Affects membrane integrity and causes an increase in membrane permeability. Associates with and induces structural rearrangements of intracellular membranes. Displays RNA-binding activity. Functionally, the precursor 3ABC is targeted to the mitochondrial membrane where protease 3C activity cleaves and inhibits the host antiviral protein MAVS, thereby disrupting activation of IRF3 through the IFIH1/MDA5 pathway. In vivo, the protease activity of 3ABC precursor is more efficient in cleaving the 2BC precursor than that of protein 3C. The 3ABC precursor may therefore play a role in the proteolytic processing of the polyprotein. Possible viroporin. In terms of biological role, interacts with the 3CD precursor and with RNA structures found at both the 5'- and 3'-termini of the viral genome. Since the 3AB precursor contains the hydrophobic domain 3A, it probably anchors the whole viral replicase complex to intracellular membranes on which viral RNA synthesis occurs. Its function is as follows. May serve as membrane anchor to the 3AB and 3ABC precursors via its hydrophobic domain. May interact with RNA. Acts as a primer for viral RNA replication and remains covalently bound to viral genomic RNA. VPg is uridylylated prior to priming replication into VPg-pUpU. The VPg-pUpU is then used as primer on the genomic RNA poly(A) by the RNA-dependent RNA polymerase to replicate the viral genome. Functionally, cysteine protease that generates mature viral proteins from the precursor polyprotein. In addition to its proteolytic activity, it binds to viral RNA, and thus influences viral genome replication. RNA and substrate bind cooperatively to the protease. Cleaves IKBKG/NEMO to impair innate immune signaling. Cleaves host PABPC1 which may participate in the switch of viral translation to RNA synthesis. In terms of biological role, interacts with the 3AB precursor and with RNA structures found at both the 5'- and 3'-termini of the viral genome. Disrupts TLR3 signaling by degrading the host adapter protein TICAM1/TRIF. Its function is as follows. RNA-directed RNA polymerase 3D-POL replicates genomic and antigenomic RNA by recognizing replications specific signals. This chain is Genome polyprotein, found in Homo sapiens (Human).